The sequence spans 593 residues: Chromosomal replication initiator protein DnaA (593 aa).

Positions 1–71 (MSDPCWEQCV…EIISNSDAGP (71 aa)) are domain I, interacts with DnaA modulators. A domain II region spans residues 71 to 256 (PKSLEIAVAQ…DVEGGIQHKH (186 aa)). A disordered region spans residues 97–186 (AVPVPDPLPS…STESSADRER (90 aa)). Over residues 113-124 (SFQPPKGNTSAD) the composition is skewed to polar residues. The domain III, AAA+ region stretch occupies residues 257–473 (NLNTTFIFDN…GALKRVIANA (217 aa)). The ATP site is built by Gly-301, Gly-303, Lys-304, and Thr-305. Positions 474–593 (QFTQRSISVE…VKNLLRTLTT (120 aa)) are domain IV, binds dsDNA.

The protein belongs to the DnaA family. Oligomerizes as a right-handed, spiral filament on DNA at oriC.

It is found in the cytoplasm. Plays an essential role in the initiation and regulation of chromosomal replication. ATP-DnaA binds to the origin of replication (oriC) to initiate formation of the DNA replication initiation complex once per cell cycle. Binds the DnaA box (a 9 base pair repeat at the origin) and separates the double-stranded (ds)DNA. Forms a right-handed helical filament on oriC DNA; dsDNA binds to the exterior of the filament while single-stranded (ss)DNA is stabiized in the filament's interior. The ATP-DnaA-oriC complex binds and stabilizes one strand of the AT-rich DNA unwinding element (DUE), permitting loading of DNA polymerase. After initiation quickly degrades to an ADP-DnaA complex that is not apt for DNA replication. Binds acidic phospholipids. This Teredinibacter turnerae (strain ATCC 39867 / T7901) protein is Chromosomal replication initiator protein DnaA.